The following is a 234-amino-acid chain: Ribitol-5-phosphate cytidylyltransferase (234 aa).

Residues 7 to 10 and 79 to 85 contribute to the CTP site; these read LAGG and GSIVQKS.

The protein belongs to the IspD/TarI cytidylyltransferase family. TarI subfamily.

The enzyme catalyses D-ribitol 5-phosphate + CTP + H(+) = CDP-L-ribitol + diphosphate. Its pathway is cell wall biogenesis; poly(ribitol phosphate) teichoic acid biosynthesis. Its function is as follows. Catalyzes the transfer of the cytidylyl group of CTP to D-ribitol 5-phosphate. In Lacticaseibacillus paracasei (strain ATCC 334 / BCRC 17002 / CCUG 31169 / CIP 107868 / KCTC 3260 / NRRL B-441) (Lactobacillus paracasei), this protein is Ribitol-5-phosphate cytidylyltransferase.